The following is an 800-amino-acid chain: General transcription and DNA repair factor IIH helicase/translocase subunit XPB (800 aa).

Residues 1-27 (MSSGDSNLKRRRGGNTGQSSKSYNTWT) are disordered. The span at 17-27 (GQSSKSYNTWT) shows a compositional bias: polar residues. In terms of domain architecture, Helicase ATP-binding spans 329–491 (MFGNGRARSG…DLNFLIGPKL (163 aa)). An ATP-binding site is contributed by 342 to 349 (LPCGAGKS). The DEVH box signature appears at 444–447 (DEVH). The Helicase C-terminal domain occupies 546–704 (RACEYLIRFH…ELPGIDQEVN (159 aa)). Residues 743–769 (GAKKSKSSAPTVSRTTGGSTRALSGGN) form a disordered region. Polar residues predominate over residues 749 to 764 (SSAPTVSRTTGGSTRA).

It belongs to the helicase family. RAD25/XPB subfamily. As to quaternary structure, component of the 7-subunit TFIIH core complex composed of XPB/repB, XPD/repD, gtf2h1, gtf2h2, gtf2h3, gtf2h4 and gtf2h5, which is active in NER. The core complex associates with the 3-subunit CDK-activating kinase (CAK) module composed of cycH/cyclin H, cdk7 and mnat1 to form the 10-subunit holoenzyme (holo-TFIIH) active in transcription.

The protein localises to the nucleus. The catalysed reaction is Couples ATP hydrolysis with the unwinding of duplex DNA by translocating in the 3'-5' direction.. It catalyses the reaction ATP + H2O = ADP + phosphate + H(+). In terms of biological role, ATP-dependent 3'-5' DNA helicase/translocase; binds dsDNA rather than ssDNA, unzipping it in a translocase rather than classical helicase activity. Component of the general transcription and DNA repair factor IIH (TFIIH) core complex. When complexed to CDK-activating kinase (CAK), involved in RNA transcription by RNA polymerase II. The ATPase activity of XPB/ERCC3, but not its helicase activity, is required for DNA opening; it may wrap around the damaged DNA wedging it open, causing localized melting and twisting that allows XPD/ERCC2 helicase to anchor. The ATP-dependent helicase activity of XPB/ERCC3 may be required for promoter escape. Also involved in transcription-coupled nucleotide excision repair (NER) of damaged DNA. In NER, TFIIH acts by opening DNA around the lesion to allow the excision of the damaged oligonucleotide and its replacement by a new DNA fragment. The structure of the TFIIH transcription complex differs from the NER-TFIIH complex. In Dictyostelium discoideum (Social amoeba), this protein is General transcription and DNA repair factor IIH helicase/translocase subunit XPB.